The primary structure comprises 214 residues: Thymidylate kinase (214 aa).

10-17 (GGEGAGKS) lines the ATP pocket.

It belongs to the thymidylate kinase family.

It carries out the reaction dTMP + ATP = dTDP + ADP. In terms of biological role, phosphorylation of dTMP to form dTDP in both de novo and salvage pathways of dTTP synthesis. This Brucella suis (strain ATCC 23445 / NCTC 10510) protein is Thymidylate kinase.